Reading from the N-terminus, the 248-residue chain is Probable capsular polysaccharide biosynthesis protein YwqC (248 aa).

2 consecutive transmembrane segments (helical) span residues I18 to F38 and L174 to L194.

The protein belongs to the CpsC/CapA family. Not phosphorylated in vitro by YwqD.

The protein localises to the cell membrane. It functions in the pathway capsule biogenesis; capsule polysaccharide biosynthesis. Its function is as follows. Required for YwqD kinase activity. May bring YwqD and its substrates into contact. Probably involved in the regulation of capsular polysaccharide biosynthesis. The sequence is that of Probable capsular polysaccharide biosynthesis protein YwqC (ywqC) from Bacillus subtilis (strain 168).